Here is a 498-residue protein sequence, read N- to C-terminus: UDP-N-acetylmuramoyl-L-alanyl-D-glutamate--2,6-diaminopimelate ligase (498 aa).

Ser29 serves as a coordination point for UDP-N-acetyl-alpha-D-muramoyl-L-alanyl-D-glutamate. 120-126 (GTDGKTS) lines the ATP pocket. Residues 162-163 (TT), Ser189, Gln195, and Arg197 each bind UDP-N-acetyl-alpha-D-muramoyl-L-alanyl-D-glutamate. Lys229 carries the post-translational modification N6-carboxylysine. Residues Arg392, 416-419 (DNPR), Gly466, and Glu470 contribute to the meso-2,6-diaminopimelate site. The Meso-diaminopimelate recognition motif signature appears at 416 to 419 (DNPR).

Belongs to the MurCDEF family. MurE subfamily. The cofactor is Mg(2+). Post-translationally, carboxylation is probably crucial for Mg(2+) binding and, consequently, for the gamma-phosphate positioning of ATP.

The protein resides in the cytoplasm. It carries out the reaction UDP-N-acetyl-alpha-D-muramoyl-L-alanyl-D-glutamate + meso-2,6-diaminopimelate + ATP = UDP-N-acetyl-alpha-D-muramoyl-L-alanyl-gamma-D-glutamyl-meso-2,6-diaminopimelate + ADP + phosphate + H(+). It functions in the pathway cell wall biogenesis; peptidoglycan biosynthesis. Functionally, catalyzes the addition of meso-diaminopimelic acid to the nucleotide precursor UDP-N-acetylmuramoyl-L-alanyl-D-glutamate (UMAG) in the biosynthesis of bacterial cell-wall peptidoglycan. This Alkalilimnicola ehrlichii (strain ATCC BAA-1101 / DSM 17681 / MLHE-1) protein is UDP-N-acetylmuramoyl-L-alanyl-D-glutamate--2,6-diaminopimelate ligase.